The following is a 426-amino-acid chain: Inositol hexakisphosphate kinase 2 (426 aa).

Residues glutamate 207–leucine 209 and aspartate 220 contribute to the ATP site. Substrate contacts are provided by residues lysine 222 and lysine 236–lysine 243. Aspartate 383 lines the ATP pocket. Histidine 386 provides a ligand contact to substrate.

The protein belongs to the inositol phosphokinase (IPK) family.

It is found in the nucleus. It carries out the reaction 1D-myo-inositol hexakisphosphate + ATP = 5-diphospho-1D-myo-inositol 1,2,3,4,6-pentakisphosphate + ADP. The protein operates within phospholipid metabolism; phosphatidylinositol metabolism. Its activity is regulated as follows. Inhibited by flavonoids, including myricetin, quercetin, luteolin, isorhamnetin, rhamnetin, kaempferol, diosmetin and apigenin. Functionally, converts inositol hexakisphosphate (InsP6) to diphosphoinositol pentakisphosphate (InsP7/PP-InsP5). This is Inositol hexakisphosphate kinase 2 from Homo sapiens (Human).